A 218-amino-acid chain; its full sequence is ER lumen protein-retaining receptor (218 aa).

The Lumenal portion of the chain corresponds to 1 to 2 (MN). A helical transmembrane segment spans residues 3 to 23 (LFSFLGDMLHLGSMLILLFKI). Residues 24–57 (KNDKSCAGVSLKSQILFTIVFTARYLDLFTNYVS) lie on the Cytoplasmic side of the membrane. The helical transmembrane segment at 58-78 (LYITFMKITYIAVSYYTLHLI) threads the bilayer. Residues 79 to 94 (ARKYKFTYDKDHDTFK) lie on the Lumenal side of the membrane. The chain crosses the membrane as a helical span at residues 95 to 115 (IVYLIASCAILSLITYDKTTI). Residues 116–123 (GIYSTFLE) lie on the Cytoplasmic side of the membrane. Residues 124 to 144 (ILWTFSIYLESIAILPQLILL) form a helical membrane-spanning segment. The Lumenal segment spans residues 145–152 (QRTGEVEA). The chain crosses the membrane as a helical span at residues 153 to 173 (LTSNYIVLLGGYRAFYLFNWI). Residues 174 to 184 (YRITFYNWSGK) are Cytoplasmic-facing. The helical transmembrane segment at 185–205 (IEMLSGLLQTILYADFFYYYA) threads the bilayer. Residues 206–218 (KSRMYGKKLVLPQ) lie on the Lumenal side of the membrane.

It belongs to the ERD2 family.

The protein resides in the endoplasmic reticulum membrane. Required for the retention of luminal endoplasmic reticulum proteins. Determines the specificity of the luminal ER protein retention system. Also required for normal vesicular traffic through the Golgi. The polypeptide is ER lumen protein-retaining receptor (kdelr) (Dictyostelium discoideum (Social amoeba)).